Reading from the N-terminus, the 132-residue chain is Fertilization-influencing membrane protein (132 aa).

The helical transmembrane segment at 100-120 threads the bilayer; the sequence is PGLFHHILVGLLVVAFFFLLF.

As to expression, testis-specific.

The protein localises to the cell membrane. In terms of biological role, may play a role in sperm-oocyte fusion during fertilization. This Homo sapiens (Human) protein is Fertilization-influencing membrane protein.